A 488-amino-acid polypeptide reads, in one-letter code: 2,3-bisphosphoglycerate-independent phosphoglycerate mutase (488 aa).

The active-site Phosphoserine intermediate is the Ser10. Ser10 is a Mn(2+) binding site. Substrate contacts are provided by residues His69, Arg99–Asp100, Arg135, Arg142, Arg215–Arg218, and Lys290. Residues Asp359, His363, Asp400, His401, and His430 each coordinate Mn(2+).

The protein belongs to the BPG-independent phosphoglycerate mutase family. As to quaternary structure, monomer. It depends on Mn(2+) as a cofactor.

The protein resides in the cytoplasm. The enzyme catalyses (2R)-2-phosphoglycerate = (2R)-3-phosphoglycerate. The protein operates within carbohydrate degradation; glycolysis; pyruvate from D-glyceraldehyde 3-phosphate: step 3/5. In terms of biological role, catalyzes the interconversion of 2-phosphoglycerate and 3-phosphoglycerate. The chain is 2,3-bisphosphoglycerate-independent phosphoglycerate mutase from Prunus dulcis (Almond).